A 385-amino-acid polypeptide reads, in one-letter code: Protein-glutamate methylesterase/protein-glutamine glutaminase (385 aa).

The Response regulatory domain maps to 20 to 138 (RVMIVDDSVV…EASAADIFKH (119 aa)). The residue at position 71 (aspartate 71) is a 4-aspartylphosphate. Positions 189–383 (GVTAPRVLLI…PKLVRLFSGD (195 aa)) constitute a CheB-type methylesterase domain. Catalysis depends on residues serine 201, histidine 229, and aspartate 325.

This sequence belongs to the CheB family. Phosphorylated by CheA. Phosphorylation of the N-terminal regulatory domain activates the methylesterase activity.

Its subcellular location is the cytoplasm. It carries out the reaction [protein]-L-glutamate 5-O-methyl ester + H2O = L-glutamyl-[protein] + methanol + H(+). The catalysed reaction is L-glutaminyl-[protein] + H2O = L-glutamyl-[protein] + NH4(+). Involved in chemotaxis. Part of a chemotaxis signal transduction system that modulates chemotaxis in response to various stimuli. Catalyzes the demethylation of specific methylglutamate residues introduced into the chemoreceptors (methyl-accepting chemotaxis proteins or MCP) by CheR. Also mediates the irreversible deamidation of specific glutamine residues to glutamic acid. This is Protein-glutamate methylesterase/protein-glutamine glutaminase from Rhodopseudomonas palustris (strain BisB5).